We begin with the raw amino-acid sequence, 191 residues long: Putative glutathione-dependent formaldehyde-activating enzyme (191 aa).

Residues 20–166 (FAGGKLRCHC…FKALGLQTYD (147 aa)) enclose the CENP-V/GFA domain. Zn(2+)-binding residues include Cys27, Cys29, Cys48, Cys50, Cys53, Cys95, and Cys98.

It belongs to the Gfa family. Requires Zn(2+) as cofactor.

It carries out the reaction S-(hydroxymethyl)glutathione = glutathione + formaldehyde. Its pathway is one-carbon metabolism; formaldehyde degradation; formate from formaldehyde (glutathione route): step 1/3. Functionally, catalyzes the condensation of formaldehyde and glutathione to S-hydroxymethylglutathione. The protein is Putative glutathione-dependent formaldehyde-activating enzyme of Penicillium rubens (strain ATCC 28089 / DSM 1075 / NRRL 1951 / Wisconsin 54-1255) (Penicillium chrysogenum).